The following is a 200-amino-acid chain: Max dimerization protein 3 (200 aa).

2 disordered regions span residues 31-56 (SILP…DNVR) and 133-164 (RLLP…QEDL). One can recognise a bHLH domain in the interval 54 to 106 (NVRSVHNELEKHRRAQLRRCLEQLKQQVPLSMENSRHTTLSLLHRAKQHIKKL).

In terms of assembly, efficient DNA binding requires dimerization with another bHLH protein. Binds DNA as a heterodimer with MAX. Expressed broadly throughout the CNS and the eye, starting at neurula stages.

It is found in the nucleus. In terms of biological role, transcriptional repressor. Binds with MAX to form a sequence-specific DNA-binding protein complex which recognizes the core sequence 5'-CAC[GA]TG-3'. This Xenopus laevis (African clawed frog) protein is Max dimerization protein 3 (mxd3).